The chain runs to 1349 residues: Zinc finger protein 804B (1349 aa).

The C2H2-type zinc finger occupies 55 to 79; that stretch reads FYCELCDKQYHKHQEFDNHINSYDH. The interval 985–1010 is disordered; that stretch reads YASESRNDQDSAIPRTTEKDKSKSSH.

The protein is Zinc finger protein 804B (ZNF804B) of Homo sapiens (Human).